The following is a 246-amino-acid chain: uncharacterized protein (246 aa).

This is an uncharacterized protein from Thermotoga maritima (strain ATCC 43589 / DSM 3109 / JCM 10099 / NBRC 100826 / MSB8).